The sequence spans 113 residues: UPF0102 protein Ccon26_01140 (113 aa).

The protein belongs to the UPF0102 family.

This Campylobacter concisus (strain 13826) protein is UPF0102 protein Ccon26_01140.